We begin with the raw amino-acid sequence, 246 residues long: Dihydroorotate dehydrogenase B (NAD(+)), electron transfer subunit (246 aa).

Positions 3–97 constitute an FAD-binding FR-type domain; the sequence is EKYTVEKVYE…TGPLGNGFNV (95 aa). FAD contacts are provided by residues 50–53 and 72–73; these read RPIS and GT. The [2Fe-2S] cluster site is built by Cys211, Cys216, Cys219, and Cys231.

Belongs to the PyrK family. Heterotetramer of 2 PyrK and 2 PyrD type B subunits. [2Fe-2S] cluster is required as a cofactor. Requires FAD as cofactor.

The protein operates within pyrimidine metabolism; UMP biosynthesis via de novo pathway; orotate from (S)-dihydroorotate (NAD(+) route): step 1/1. Its function is as follows. Responsible for channeling the electrons from the oxidation of dihydroorotate from the FMN redox center in the PyrD type B subunit to the ultimate electron acceptor NAD(+). The protein is Dihydroorotate dehydrogenase B (NAD(+)), electron transfer subunit of Clostridium acetobutylicum (strain ATCC 824 / DSM 792 / JCM 1419 / IAM 19013 / LMG 5710 / NBRC 13948 / NRRL B-527 / VKM B-1787 / 2291 / W).